Here is a 349-residue protein sequence, read N- to C-terminus: MKSVLYSYILFLSCIIINGRDVTPYAPSNGKCKDNEYKRHNLCCLSCPPGTYASRLCDSKTNTQCTPCGSGTFTSRNNHLPACLSCNGRCDSNQVETRSCNTTHNRICECSPGYYCILKGSSGCKACVSQTKCGIGYGVSGHTSAGDVICSPCGLGTYSRTVSSADKCEPVPSNTFNYIDVEINLYPVNDTSCTRTTTTGISESISTSELTITMNHKDCDPVFREEYFSVLNKVATSGFFTGENRYQNISKVCTLNFEIKCNNKGSSSKQLTKAKNDDGIMPHSETVTLVGDCLSSVDIYILYSNTNTQDYETDTISYHAGNVLDVDSHMPGSCDIHKLITNSKPTHFL.

Residues 1-19 form the signal peptide; sequence MKSVLYSYILFLSCIIING. 2 TNFR-Cys repeats span residues 31–65 and 67–108; these read KCKDNEYKRHNLCCLSCPPGTYASRLCDSKTNTQC and PCGS…NRIC. Disulfide bonds link C32–C43, C44–C57, C47–C65, C68–C83, C86–C100, and C90–C108. N101, N189, and N248 each carry an N-linked (GlcNAc...) asparagine; by host glycan.

Belongs to the orthopoxvirus OPG002 family.

Inhibits host immune defense by binding to host TNF and various chemokines in the extracellular space. Binds host CC chemokines (beta chemokines) and CXC chemokines (alpha chemokines). The protein is Soluble TNF receptor II (OPG002) of Camelus.